The chain runs to 136 residues: Large ribosomal subunit protein uL16 (136 aa).

Belongs to the universal ribosomal protein uL16 family. As to quaternary structure, part of the 50S ribosomal subunit.

Binds 23S rRNA and is also seen to make contacts with the A and possibly P site tRNAs. The protein is Large ribosomal subunit protein uL16 of Serratia proteamaculans (strain 568).